Here is a 267-residue protein sequence, read N- to C-terminus: uncharacterized protein (267 aa).

A helical transmembrane segment spans residues 30 to 52 (FMRIFLLFLFFVLFTFGVEGYVI).

It is found in the membrane. This is an uncharacterized protein from Aquifex aeolicus (strain VF5).